A 1476-amino-acid chain; its full sequence is Cystic fibrosis transmembrane conductance regulator (1476 aa).

The Cytoplasmic segment spans residues 1-77; sequence MQKSPLEKAS…QLIHALRRCF (77 aa). A helical transmembrane segment spans residues 78-98; it reads FWRFLFYGILLYLGEVTKAVQ. Residues 81–365 enclose the ABC transmembrane type-1 1 domain; the sequence is FLFYGILLYL…TAVQIWYDSF (285 aa). Over 99–122 the chain is Extracellular; the sequence is PVLLGRIIASYDPENKVERSIAIY. The chain crosses the membrane as a helical span at residues 123–146; that stretch reads LGIGLCLLFIVRTLLLHPAIFGLH. At 147–195 the chain is on the cytoplasmic side; that stretch reads RIGMQMRTAMFSLIYKKTLKLSSRVLDKISIGQLVSLLSNNLNKFDEGL. A helical membrane pass occupies residues 196–216; it reads ALAHFIWIAPLQVTLLMGLLW. Residues 217 to 222 lie on the Extracellular side of the membrane; it reads DLLQFS. The helical transmembrane segment at 223–243 threads the bilayer; that stretch reads AFCGLGLLIILVIFQAILGKM. The Cytoplasmic segment spans residues 244 to 298; that stretch reads MVKYRDQRAAKINERLVITSEIIDNIYSVKAYCWESAMEKMIENLREVELKMTRK. A helical membrane pass occupies residues 299-319; that stretch reads AAYMRFFTSSAFFFSGFFVVF. Residues 320-339 are Extracellular-facing; sequence LSVLPYTVINGIVLRKIFTT. A helical transmembrane segment spans residues 340–358; the sequence is ISFCIVLRMSVTRQFPTAV. At 359 to 853 the chain is on the cytoplasmic side; that stretch reads QIWYDSFGMI…YLRYFTLHKG (495 aa). Residues Trp-401, 458–465, and Gln-493 each bind ATP; that span reads GSTGSGKT. Residues 423-646 enclose the ABC transporter 1 domain; that stretch reads SDENNVSFSH…RPDFSSKLMG (224 aa). Residue Cys-524 is the site of S-palmitoyl cysteine attachment. Residues Ser-549 and Ser-660 each carry the phosphoserine modification. A disordered R region region spans residues 654-826; sequence TEERRSSILT…EEINEEDLKE (173 aa). Phosphoserine; by PKA is present on Ser-670. Phosphoserine is present on residues Ser-684, Ser-698, and Ser-710. The residue at position 715 (Thr-715) is a Phosphothreonine. Phosphoserine is present on residues Ser-732, Ser-763, Ser-785, Ser-790, and Ser-808. Residues 854–874 traverse the membrane as a helical segment; the sequence is LLLVLIWCVLVFLVEVAASLF. The 300-residue stretch at 854-1153 folds into the ABC transmembrane type-1 2 domain; that stretch reads LLLVLIWCVL…SSIDTDSLMR (300 aa). Topologically, residues 875–913 are extracellular; it reads VLWLLKNNPVNSGNNGTKISNSSYVVIITSTSFYYIFYI. Residues Asn-889 and Asn-895 are each glycosylated (N-linked (GlcNAc...) asparagine). A discontinuously helical membrane pass occupies residues 914 to 934; sequence YVGVADTLLALSLFRGLPLVH. At 935–985 the chain is on the cytoplasmic side; it reads TLITASKILHRKMLHSILHAPMSTISKLKAGGILNRFSKDIAILDDFLPLT. Residues 986–1006 form a helical membrane-spanning segment; sequence IFDFIQLVFIVIGAIIVVSAL. The Extracellular segment spans residues 1007-1008; that stretch reads QP. The helical transmembrane segment at 1009–1029 threads the bilayer; sequence YIFLATVPGLVVFILLRAYFL. Residues 1030–1090 lie on the Cytoplasmic side of the membrane; sequence HTAQQLKQLE…TANWFMYLAT (61 aa). Residues 1091 to 1111 traverse the membrane as a helical segment; the sequence is LRWFQMRIDMIFVLFFIVVTF. The Extracellular segment spans residues 1112–1125; sequence ISILTTGEGEGTAG. The helical transmembrane segment at 1126–1146 threads the bilayer; it reads IILTLAMNIMSTLQWAVNSSI. The Cytoplasmic segment spans residues 1147-1476; it reads DTDSLMRSVS…TEEEVQETRL (330 aa). Residues 1208–1439 enclose the ABC transporter 2 domain; the sequence is VKDLTVKYMD…KSIFQQAISS (232 aa). ATP contacts are provided by residues Tyr-1215 and 1240–1247; that span reads GRTGSGKS. The tract at residues 1382 to 1476 is interaction with GORASP2; sequence RVLKQAFAGC…TEEEVQETRL (95 aa). A lipid anchor (S-palmitoyl cysteine) is attached at Cys-1391. Phosphoserine is present on residues Ser-1440 and Ser-1452. The tract at residues 1446-1476 is disordered; sequence FQGRHSSKHKPRTQITALKEETEEEVQETRL. The segment covering 1466 to 1476 has biased composition (acidic residues); that stretch reads ETEEEVQETRL. A PDZ-binding motif is present at residues 1474 to 1476; that stretch reads TRL.

It belongs to the ABC transporter superfamily. ABCC family. CFTR transporter (TC 3.A.1.202) subfamily. Monomer; does not require oligomerization for channel activity. May form oligomers in the membrane. Interacts with SLC26A3, SLC26A6 and NHERF1. Interacts with SHANK2. Interacts with MYO6. Interacts (via C-terminus) with GOPC (via PDZ domain); this promotes CFTR internalization and thereby decreases channel activity. Interacts with SLC4A7 through NHERF1. Found in a complex with MYO5B and RAB11A. Interacts with ANO1. Interacts with SLC26A8. Interacts with AHCYL1; the interaction increases CFTR activity. Interacts with CSE1L. The core-glycosylated form interacts with GORASP2 (via PDZ GRASP-type 1 domain) in respone to ER stress. Interacts with MARCHF2; the interaction leads to CFTR ubiqtuitination and degradation. Interacts with ADGRG2. In terms of processing, N-glycosylated. Phosphorylated; cAMP treatment promotes phosphorylation and activates the channel. Dephosphorylation decreases the ATPase activity (in vitro). Phosphorylation at PKA sites activates the channel. Phosphorylation at PKC sites enhances the response to phosphorylation by PKA. Phosphorylated by AMPK; this inhibits channel activity. Post-translationally, ubiquitinated, leading to its degradation in the lysosome. Deubiquitination by USP10 in early endosomes enhances its endocytic recycling to the cell membrane. Ubiquitinated by RNF185 during ER stress. Ubiquitinated by MARCHF2. Expressed in the epididymis (at protein level). In the initial segment of the epididymis, detected on both the luminal and basolateral sides of the ducts where it is expressed in the duct columnar cells as well as in the interstitial smooth muscle cells. Expressed in sperm in the caput. In the cauda, detected along the luminal border but not continuously and is also expressed on the basolateral surface. Within the caudal lumen, detected on sperm. Isoform 1: Expressed in a variety of epithelial tissues including colon, kidney, lung, small intestine, pancreatic duct and testis. Isoform 2: Expressed only in testis. Isoform 3: Expressed only in testis.

The protein resides in the apical cell membrane. The protein localises to the early endosome membrane. It localises to the cell membrane. Its subcellular location is the recycling endosome membrane. It is found in the endoplasmic reticulum membrane. The protein resides in the nucleus. The enzyme catalyses ATP + H2O + closed Cl(-) channel = ADP + phosphate + open Cl(-) channel.. It carries out the reaction chloride(in) = chloride(out). The catalysed reaction is hydrogencarbonate(in) = hydrogencarbonate(out). It catalyses the reaction ATP + H2O = ADP + phosphate + H(+). Epithelial ion channel that plays an important role in the regulation of epithelial ion and water transport and fluid homeostasis. Mediates the transport of chloride ions across the cell membrane. Possesses an intrinsic ATPase activity and utilizes ATP to gate its channel; the passive flow of anions through the channel is gated by cycles of ATP binding and hydrolysis by the ATP-binding domains. The ion channel is also permeable to HCO(3)(-); selectivity depends on the extracellular chloride concentration. Exerts its function also by modulating the activity of other ion channels and transporters. Contributes to the regulation of the pH and the ion content of the epithelial fluid layer. Modulates the activity of the epithelial sodium channel (ENaC) complex, in part by regulating the cell surface expression of the ENaC complex. May regulate bicarbonate secretion and salvage in epithelial cells by regulating the transporter SLC4A7. Can inhibit the chloride channel activity of ANO1. Plays a role in the chloride and bicarbonate homeostasis during sperm epididymal maturation and capacitation. The protein is Cystic fibrosis transmembrane conductance regulator of Mus musculus (Mouse).